The primary structure comprises 432 residues: Ectonucleoside triphosphate diphosphohydrolase 5 (432 aa).

An N-terminal signal peptide occupies residues 1 to 24 (MALYQGAAFFMLVASCVCSTVFHR). Glu175 serves as the catalytic Proton acceptor. N-linked (GlcNAc...) asparagine glycosylation occurs at Asn235. Cystine bridges form between Cys275/Cys307 and Cys367/Cys381. N-linked (GlcNAc...) asparagine glycosylation is present at Asn372.

It belongs to the GDA1/CD39 NTPase family. In terms of assembly, monomer; active form. Homodimer; disulfide-linked. Homodimers are enzymatically inactive. Ca(2+) serves as cofactor. The cofactor is Mg(2+). N-glycosylated; high-mannose type.

It is found in the endoplasmic reticulum. Its subcellular location is the secreted. It catalyses the reaction a ribonucleoside 5'-diphosphate + H2O = a ribonucleoside 5'-phosphate + phosphate + H(+). The enzyme catalyses GDP + H2O = GMP + phosphate + H(+). It carries out the reaction UDP + H2O = UMP + phosphate + H(+). The catalysed reaction is IDP + H2O = IMP + phosphate + H(+). It catalyses the reaction CDP + H2O = CMP + phosphate + H(+). The enzyme catalyses ADP + H2O = AMP + phosphate + H(+). Its pathway is protein modification; protein glycosylation. Hydrolyzes nucleoside diphosphates with a preference for GDP, IDP and UDP compared to ADP and CDP. In the lumen of the endoplasmic reticulum, hydrolyzes UDP that acts as an end-product feedback inhibitor of the UDP-Glc:glycoprotein glucosyltransferases. UMP can be transported back by an UDP-sugar antiporter to the cytosol where it is consumed to regenerate UDP-glucose. Therefore, it positively regulates protein reglucosylation by clearing UDP from the ER lumen and by promoting the regeneration of UDP-glucose. Protein reglucosylation is essential to proper glycoprotein folding and quality control in the ER. The polypeptide is Ectonucleoside triphosphate diphosphohydrolase 5 (ENTPD5) (Bos taurus (Bovine)).